The chain runs to 317 residues: 4-hydroxy-3-methylbut-2-enyl diphosphate reductase (317 aa).

Cysteine 12 lines the [4Fe-4S] cluster pocket. (2E)-4-hydroxy-3-methylbut-2-enyl diphosphate contacts are provided by histidine 41 and histidine 74. 2 residues coordinate dimethylallyl diphosphate: histidine 41 and histidine 74. Residues histidine 41 and histidine 74 each contribute to the isopentenyl diphosphate site. Position 97 (cysteine 97) interacts with [4Fe-4S] cluster. Histidine 125 serves as a coordination point for (2E)-4-hydroxy-3-methylbut-2-enyl diphosphate. Histidine 125 lines the dimethylallyl diphosphate pocket. Histidine 125 is an isopentenyl diphosphate binding site. Residue glutamate 127 is the Proton donor of the active site. Threonine 168 provides a ligand contact to (2E)-4-hydroxy-3-methylbut-2-enyl diphosphate. [4Fe-4S] cluster is bound at residue cysteine 198. Serine 226, serine 227, asparagine 228, and serine 270 together coordinate (2E)-4-hydroxy-3-methylbut-2-enyl diphosphate. Dimethylallyl diphosphate is bound by residues serine 226, serine 227, asparagine 228, and serine 270. Serine 226, serine 227, asparagine 228, and serine 270 together coordinate isopentenyl diphosphate.

The protein belongs to the IspH family. Homodimer. The cofactor is [4Fe-4S] cluster.

It carries out the reaction isopentenyl diphosphate + 2 oxidized [2Fe-2S]-[ferredoxin] + H2O = (2E)-4-hydroxy-3-methylbut-2-enyl diphosphate + 2 reduced [2Fe-2S]-[ferredoxin] + 2 H(+). The catalysed reaction is dimethylallyl diphosphate + 2 oxidized [2Fe-2S]-[ferredoxin] + H2O = (2E)-4-hydroxy-3-methylbut-2-enyl diphosphate + 2 reduced [2Fe-2S]-[ferredoxin] + 2 H(+). The protein operates within isoprenoid biosynthesis; dimethylallyl diphosphate biosynthesis; dimethylallyl diphosphate from (2E)-4-hydroxy-3-methylbutenyl diphosphate: step 1/1. It participates in isoprenoid biosynthesis; isopentenyl diphosphate biosynthesis via DXP pathway; isopentenyl diphosphate from 1-deoxy-D-xylulose 5-phosphate: step 6/6. Functionally, catalyzes the conversion of 1-hydroxy-2-methyl-2-(E)-butenyl 4-diphosphate (HMBPP) into a mixture of isopentenyl diphosphate (IPP) and dimethylallyl diphosphate (DMAPP). Acts in the terminal step of the DOXP/MEP pathway for isoprenoid precursor biosynthesis. In Proteus mirabilis (strain HI4320), this protein is 4-hydroxy-3-methylbut-2-enyl diphosphate reductase.